Consider the following 179-residue polypeptide: Large ribosomal subunit protein uL6 (179 aa).

Belongs to the universal ribosomal protein uL6 family. As to quaternary structure, part of the 50S ribosomal subunit.

In terms of biological role, this protein binds to the 23S rRNA, and is important in its secondary structure. It is located near the subunit interface in the base of the L7/L12 stalk, and near the tRNA binding site of the peptidyltransferase center. In Syntrophomonas wolfei subsp. wolfei (strain DSM 2245B / Goettingen), this protein is Large ribosomal subunit protein uL6.